The chain runs to 235 residues: Putative quercetin 2,3-dioxygenase ZMO1337 (235 aa).

4 residues coordinate a divalent metal cation: H57, H59, H101, and E103.

Belongs to the pirin family. It depends on a divalent metal cation as a cofactor.

It catalyses the reaction quercetin + O2 = 2-(3,4-dihydroxybenzoyloxy)-4,6-dihydroxybenzoate + CO. It functions in the pathway flavonoid metabolism; quercetin degradation. Functionally, putative quercetin 2,3-dioxygenase. This is Putative quercetin 2,3-dioxygenase ZMO1337 from Zymomonas mobilis subsp. mobilis (strain ATCC 31821 / ZM4 / CP4).